The chain runs to 159 residues: NAD(P)H-quinone oxidoreductase subunit N (159 aa).

Belongs to the complex I NdhN subunit family. As to quaternary structure, NDH-1 can be composed of about 15 different subunits; different subcomplexes with different compositions have been identified which probably have different functions.

Its subcellular location is the cell inner membrane. It catalyses the reaction a plastoquinone + NADH + (n+1) H(+)(in) = a plastoquinol + NAD(+) + n H(+)(out). It carries out the reaction a plastoquinone + NADPH + (n+1) H(+)(in) = a plastoquinol + NADP(+) + n H(+)(out). In terms of biological role, NDH-1 shuttles electrons from an unknown electron donor, via FMN and iron-sulfur (Fe-S) centers, to quinones in the respiratory and/or the photosynthetic chain. The immediate electron acceptor for the enzyme in this species is believed to be plastoquinone. Couples the redox reaction to proton translocation, and thus conserves the redox energy in a proton gradient. Cyanobacterial NDH-1 also plays a role in inorganic carbon-concentration. The sequence is that of NAD(P)H-quinone oxidoreductase subunit N from Gloeobacter violaceus (strain ATCC 29082 / PCC 7421).